The primary structure comprises 519 residues: Cell division cycle protein 20 homolog B (519 aa).

Residues 77-106 (WQLSPARDPESSSSVEEGPPSHTPESLASG) form a disordered region. Over residues 87–96 (SSSSVEEGPP) the composition is skewed to low complexity. WD repeat units lie at residues 229–266 (RNDY…WIEN), 271–310 (VCCH…QLRN), 353–392 (YHKE…GVQG), 399–441 (PQST…NIQT), 443–484 (STQS…RSGG), and 487–519 (GHRD…WKCC).

Belongs to the WD repeat CDC20/Fizzy family. As to expression, expressed in multiciliated cells (MCCs).

The protein localises to the cytoplasm. Its function is as follows. Protein regulator of centriole-deuterosome disengagement and subsequently participates in the ciliogenesis in multiciliated cells (MCCs). The protein is Cell division cycle protein 20 homolog B of Mus musculus (Mouse).